The primary structure comprises 289 residues: Rhodopsin (289 aa).

The Extracellular portion of the chain corresponds to 1 to 7 (YLVSPAA). Residues 8 to 32 (YAALGAYMFLLILIGFPVNFLTLYV) traverse the membrane as a helical segment. The Cytoplasmic portion of the chain corresponds to 33-44 (TLEHKKLRTPLN). Residues 45–67 (YILLNLAVADLFMVLGGFTTTMY) form a helical membrane-spanning segment. Topologically, residues 68-81 (TSMHGYFVLGRLGC) are extracellular. Cys81 and Cys158 are disulfide-bonded. A helical transmembrane segment spans residues 82–104 (NLEGFFATLGGEIALWSLVVLAI). The 'Ionic lock' involved in activated form stabilization signature appears at 105–107 (ERW). The Cytoplasmic portion of the chain corresponds to 105–123 (ERWIVVCKPISNFRFTEDN). A helical transmembrane segment spans residues 124-144 (AIMGLAFSWVMALTCAVPPLV). The Extracellular portion of the chain corresponds to 145 to 173 (GWSRYIPEGMQCSCGVDYYTRAEGFNNES). Asn171 carries an N-linked (GlcNAc...) asparagine glycan. Residues 174-195 (FVIYMFIVHFPIPLSVIFFCYG) form a helical membrane-spanning segment. The Cytoplasmic portion of the chain corresponds to 196–223 (RLLCAVKEAAAAQQESETTQRAEKEVSR). Residues 224–245 (MVVILVIGFLVCWLPYASVAWW) traverse the membrane as a helical segment. Over 246 to 257 (IFCNQGSDFGPI) the chain is Extracellular. The helical transmembrane segment at 258–279 (FMTLPSFFAKRPAIYNPMIYIC) threads the bilayer. An N6-(retinylidene)lysine modification is found at Lys267. The Cytoplasmic segment spans residues 280–289 (MNKQFRHCMI).

It belongs to the G-protein coupled receptor 1 family. Opsin subfamily. Phosphorylated on some or all of the serine and threonine residues present in the C-terminal region. Post-translationally, contains one covalently linked retinal chromophore.

Its subcellular location is the membrane. It is found in the cell projection. The protein localises to the cilium. It localises to the photoreceptor outer segment. Functionally, photoreceptor required for image-forming vision at low light intensity. While most salt water fish species use retinal as chromophore, most freshwater fish use 3-dehydroretinal, or a mixture of retinal and 3-dehydroretinal. Light-induced isomerization of 11-cis to all-trans retinal triggers a conformational change that activates signaling via G-proteins. Subsequent receptor phosphorylation mediates displacement of the bound G-protein alpha subunit by arrestin and terminates signaling. This chain is Rhodopsin (rho), found in Batrachocottus multiradiatus (Baikal sculpin).